The primary structure comprises 395 residues: Cytoplasmic 60S subunit biogenesis factor REI1 homolog 2 (395 aa).

4 C2H2-type zinc fingers span residues Leu-4–His-28, Tyr-68–His-92, Ala-171–His-194, and Phe-222–His-249.

Belongs to the REI1 family. Can form homodimer. Interacts with RLP24, RLP24A, RPL24B, EBP1 and JJJ1.

Its subcellular location is the cytoplasm. In terms of biological role, pre-60S-associated factor involved in the cytoplasmic maturation of the 60S subunit. Involved in the dissociation and recycling of other late pre-60S factors before newly synthesized large ribosomal subunits enter translation. Can complement the growth defect of a yeast mutant lacking REI1. Required for leaf growth under cold temperature conditions. This chain is Cytoplasmic 60S subunit biogenesis factor REI1 homolog 2, found in Arabidopsis thaliana (Mouse-ear cress).